An 847-amino-acid polypeptide reads, in one-letter code: Alanine--tRNA ligase (847 aa).

Zn(2+)-binding residues include histidine 554, histidine 558, cysteine 656, and histidine 660.

It belongs to the class-II aminoacyl-tRNA synthetase family. It depends on Zn(2+) as a cofactor.

The protein resides in the cytoplasm. It catalyses the reaction tRNA(Ala) + L-alanine + ATP = L-alanyl-tRNA(Ala) + AMP + diphosphate. Catalyzes the attachment of alanine to tRNA(Ala) in a two-step reaction: alanine is first activated by ATP to form Ala-AMP and then transferred to the acceptor end of tRNA(Ala). Also edits incorrectly charged Ser-tRNA(Ala) and Gly-tRNA(Ala) via its editing domain. The polypeptide is Alanine--tRNA ligase (Helicobacter pylori (strain J99 / ATCC 700824) (Campylobacter pylori J99)).